Reading from the N-terminus, the 184-residue chain is ATP synthase subunit b (184 aa).

A helical membrane pass occupies residues 25–45; the sequence is IFPSWPIMLATLVSFTILLVV.

Belongs to the ATPase B chain family. As to quaternary structure, F-type ATPases have 2 components, F(1) - the catalytic core - and F(0) - the membrane proton channel. F(1) has five subunits: alpha(3), beta(3), gamma(1), delta(1), epsilon(1). F(0) has three main subunits: a(1), b(2) and c(10-14). The alpha and beta chains form an alternating ring which encloses part of the gamma chain. F(1) is attached to F(0) by a central stalk formed by the gamma and epsilon chains, while a peripheral stalk is formed by the delta and b chains.

The protein resides in the cell membrane. Functionally, f(1)F(0) ATP synthase produces ATP from ADP in the presence of a proton or sodium gradient. F-type ATPases consist of two structural domains, F(1) containing the extramembraneous catalytic core and F(0) containing the membrane proton channel, linked together by a central stalk and a peripheral stalk. During catalysis, ATP synthesis in the catalytic domain of F(1) is coupled via a rotary mechanism of the central stalk subunits to proton translocation. In terms of biological role, component of the F(0) channel, it forms part of the peripheral stalk, linking F(1) to F(0). The polypeptide is ATP synthase subunit b (Mycoplasma mobile (strain ATCC 43663 / 163K / NCTC 11711) (Mesomycoplasma mobile)).